The primary structure comprises 251 residues: Small ribosomal subunit protein uS4c (251 aa).

S4 RNA-binding domains are found at residues 110–170 (MRLD…KLVN) and 189–251 (RTLA…QFSE).

Belongs to the universal ribosomal protein uS4 family. Part of the 30S ribosomal subunit. Contacts protein S5. The interaction surface between S4 and S5 is involved in control of translational fidelity.

The protein localises to the plastid. Its subcellular location is the chloroplast. Functionally, one of the primary rRNA binding proteins, it binds directly to 16S rRNA where it nucleates assembly of the body of the 30S subunit. In terms of biological role, with S5 and S12 plays an important role in translational accuracy. This chain is Small ribosomal subunit protein uS4c (rps4), found in Tetradesmus obliquus (Green alga).